The sequence spans 264 residues: uncharacterized protein (264 aa).

The ABC transporter domain maps to 3-243; sequence LQLDNVSLKR…QILSAFFDTP (241 aa). 35–42 is a binding site for ATP; it reads GLNGAGKT.

Belongs to the ABC transporter superfamily.

This is an uncharacterized protein from Bacillus subtilis (strain 168).